Here is a 109-residue protein sequence, read N- to C-terminus: Small ribosomal subunit protein eS25 (109 aa).

Residues 1–13 (MVKKIQESKEKKA) show a composition bias toward basic and acidic residues. The interval 1–34 (MVKKIQESKEKKALKAASGTRKDKKKWGDGRKKE) is disordered.

This sequence belongs to the eukaryotic ribosomal protein eS25 family.

This is Small ribosomal subunit protein eS25 (RPS25-1) from Encephalitozoon cuniculi (strain GB-M1) (Microsporidian parasite).